A 514-amino-acid chain; its full sequence is 2,3-bisphosphoglycerate-independent phosphoglycerate mutase (514 aa).

Asp-14 and Ser-64 together coordinate Mn(2+). The active-site Phosphoserine intermediate is the Ser-64. Residues His-125, 155-156, Arg-187, Arg-193, 263-266, and Lys-336 contribute to the substrate site; these read RD and RADR. The Mn(2+) site is built by Asp-403, His-407, Asp-444, His-445, and His-463.

This sequence belongs to the BPG-independent phosphoglycerate mutase family. Monomer. Mn(2+) serves as cofactor.

It carries out the reaction (2R)-2-phosphoglycerate = (2R)-3-phosphoglycerate. The protein operates within carbohydrate degradation; glycolysis; pyruvate from D-glyceraldehyde 3-phosphate: step 3/5. Catalyzes the interconversion of 2-phosphoglycerate and 3-phosphoglycerate. The protein is 2,3-bisphosphoglycerate-independent phosphoglycerate mutase of Salmonella paratyphi A (strain ATCC 9150 / SARB42).